A 154-amino-acid chain; its full sequence is 17 kDa surface antigen (154 aa).

Residues 1-19 (MKLLSKIMIIALAASMLQA) form the signal peptide. The N-palmitoyl cysteine moiety is linked to residue C20. C20 carries the S-diacylglycerol cysteine lipid modification.

The protein belongs to the rickettsiale 17 kDa surface antigen family.

It localises to the cell outer membrane. The polypeptide is 17 kDa surface antigen (omp) (Rickettsia montanensis).